A 201-amino-acid chain; its full sequence is Large ribosomal subunit protein uL4 (201 aa).

Residues 44 to 68 (KAQKTRSEVAGTTKKSKKQKGGGAR) form a disordered region.

This sequence belongs to the universal ribosomal protein uL4 family. As to quaternary structure, part of the 50S ribosomal subunit.

Functionally, one of the primary rRNA binding proteins, this protein initially binds near the 5'-end of the 23S rRNA. It is important during the early stages of 50S assembly. It makes multiple contacts with different domains of the 23S rRNA in the assembled 50S subunit and ribosome. Forms part of the polypeptide exit tunnel. The sequence is that of Large ribosomal subunit protein uL4 from Xanthomonas campestris pv. campestris (strain 8004).